A 278-amino-acid chain; its full sequence is Nucleotide-binding protein Tbd_0529 (278 aa).

ATP is bound at residue Gly-8–Ser-15. Residue Asp-57 to Ser-60 participates in GTP binding.

It belongs to the RapZ-like family.

Functionally, displays ATPase and GTPase activities. This chain is Nucleotide-binding protein Tbd_0529, found in Thiobacillus denitrificans (strain ATCC 25259 / T1).